Consider the following 730-residue polypeptide: Cyclin-T2 (730 aa).

Residues 1–300 (MASGRGASSR…SVTGVPTNPS (300 aa)) are interaction with MDFIC and MDFI. The region spanning 12–147 (FFTREQLENT…IMLQTLGFEI (136 aa)) is the Cyclin N-terminal domain. The interval 250-300 (RLKKIRNWRANQAARKPKVDGQVSETPLLGSSLVQNSILVDSVTGVPTNPS) is interaction with POLR2A. Polar residues-rich tracts occupy residues 341–350 (TSYGLSSHQE) and 360–389 (TEQL…SISL). Residues 341–430 (TSYGLSSHQE…GPISTTPGII (90 aa)) form a disordered region. Basic and acidic residues predominate over residues 398–412 (DKISDHSSVKQEYTH). A Glycyl lysine isopeptide (Lys-Gly) (interchain with G-Cter in SUMO2) cross-link involves residue Lys-407. The residue at position 480 (Ser-480) is a Phosphoserine. Residues 497–652 (DKKEKSGSLK…SSSSSSSSVK (156 aa)) form a disordered region. Basic and acidic residues-rich tracts occupy residues 517–543 (SASK…EGSG) and 552–565 (ISRD…EHPS). The segment covering 566 to 578 (SRHHTSSHKHSHS) has biased composition (basic residues). Residues 579-588 (HSGSSSGGSK) show a composition bias toward low complexity. Ser-601 bears the Phosphoserine mark. Low complexity-rich tracts occupy residues 606 to 616 (SSDGISSSSSS) and 637 to 652 (SSKS…SSVK).

The protein belongs to the cyclin family. Cyclin C subfamily. As to quaternary structure, interacts with CDK9 to form P-TEFb. Interacts with POLR2A (via the C-terminal domain (CTD)); mediates transcriptional activity. Interacts with HEXIM1; mediates formation of a tripartite complex with KPNA2. Interacts with HEXIM2. Interacts with PKN1; enhances MYOD1-dependent transcription. P-TEFB complex interacts with RB1; promotes phosphorylation of RB1. P-TEFB complex interacts with MYOD1; promotes the transcriptional activity of MYOD1 through its CDK9-mediated phosphorylation. Interacts with MDFI and MDFIC. Interacts with MON1B; down-regulates CCNT2-mediated activation of viral promoters during herpes simplex virus 1/HHV-1 infection. In terms of assembly, (Microbial infection) Interacts with HIV-2 and SIV Tat. Does not bind efficiently to the transactivation domain of the HIV-1 Tat. As to expression, ubiquitously expressed.

The protein resides in the cytoplasm. Its subcellular location is the perinuclear region. It is found in the nucleus. Regulatory subunit of the cyclin-dependent kinase pair (CDK9/cyclin T) complex, also called positive transcription elongation factor B (P-TEFB), which is proposed to facilitate the transition from abortive to production elongation by phosphorylating the CTD (carboxy-terminal domain) of the large subunit of RNA polymerase II (RNAP II). The activity of this complex is regulated by binding with 7SK snRNA. Plays a role during muscle differentiation; P-TEFB complex interacts with MYOD1; this tripartite complex promotes the transcriptional activity of MYOD1 through its CDK9-mediated phosphorylation and binds the chromatin of promoters and enhancers of muscle-specific genes; this event correlates with hyperphosphorylation of the CTD domain of RNA pol II. In addition, enhances MYOD1-dependent transcription through interaction with PKN1. Involved in early embryo development. In terms of biological role, (Microbial infection) Promotes transcriptional activation of early and late herpes simplex virus 1/HHV-1 promoters. This Homo sapiens (Human) protein is Cyclin-T2.